The chain runs to 259 residues: Type III pantothenate kinase (259 aa).

6–13 (DCGNTNTV) provides a ligand contact to ATP. 107-110 (GPDR) serves as a coordination point for substrate. Residue D109 is the Proton acceptor of the active site. D129 is a K(+) binding site. T132 is a binding site for ATP. T184 contacts substrate.

The protein belongs to the type III pantothenate kinase family. Homodimer. NH4(+) serves as cofactor. Requires K(+) as cofactor.

It localises to the cytoplasm. It carries out the reaction (R)-pantothenate + ATP = (R)-4'-phosphopantothenate + ADP + H(+). It functions in the pathway cofactor biosynthesis; coenzyme A biosynthesis; CoA from (R)-pantothenate: step 1/5. In terms of biological role, catalyzes the phosphorylation of pantothenate (Pan), the first step in CoA biosynthesis. The chain is Type III pantothenate kinase from Ruegeria pomeroyi (strain ATCC 700808 / DSM 15171 / DSS-3) (Silicibacter pomeroyi).